The primary structure comprises 113 residues: Integration host factor subunit alpha (113 aa).

The segment at 87–113 (NALNGEVSDETTEGADDDDDEEGEGDE) is disordered. The segment covering 93 to 113 (VSDETTEGADDDDDEEGEGDE) has biased composition (acidic residues).

This sequence belongs to the bacterial histone-like protein family. In terms of assembly, heterodimer of an alpha and a beta chain.

In terms of biological role, this protein is one of the two subunits of integration host factor, a specific DNA-binding protein that functions in genetic recombination as well as in transcriptional and translational control. The protein is Integration host factor subunit alpha of Anaeromyxobacter dehalogenans (strain 2CP-1 / ATCC BAA-258).